A 677-amino-acid chain; its full sequence is MLSSGDLTSASWELVVRVDHANGEQQTEITLRVSGDLHIGGVMLKLVEQMNIAQDWSDYALWWEQKRCWLLKTHWTLDKCGVQADANLLFTPQHKMLRLRLPNAKTVRLRVSFSAVVFKAVADICKVLNIRRPEELSLLKPSSDYCKKKKKKEKNSKEPVIEDILNLESSSTSSGSPVSPGLYSKTMTPTYDPINGTPALSTMTWFGDSPLTEQNCSVLAFSQPPPSPDVLADMFQPRSLVDKAKMNAGWLDSSRSLMEQSIQEDEQLQLRFKYYTFFDLNPKYDAVRINQLYEQARWAVLLEEIDCTEEEMLIFAALQYHISKLSQCAEIQDFATKSEVDEVEAALSSLEVTLEGGKADNTLEDITDIPKLADYLKLFRPKKLMLKACKQYWFVFKDTSIAYFKNKELEQGEPIEKLNLRGCEIVPDVNVSGRKFGIKLLIPVADGMNEVYLRCDHEDQYARWMAACILASKGKTMADSSYQPEVISILSFLKMKNRNSSPLVASSLENMDMNPECLVSPCCAKKHKSKQLAARILEAHHNVAQMPLVEAKLQFIQAWQSLPEFGLTYYLVRFKGSKKDDILGVAYNRLIRIDAVTGIPVTTWRFANMKQWNVNWEIRQVAIEFDQNVSIAFTCLSADCKIVHEYIGGYIFLSTRSKDQNETLDEDLFHKLTGGQD.

Residues 96-653 (MLRLRLPNAK…HEYIGGYIFL (558 aa)) form the FERM domain. Positions 157 to 181 (KEPVIEDILNLESSSTSSGSPVSPG) are disordered. Residues 169 to 181 (SSSTSSGSPVSPG) are compositionally biased toward low complexity. 2 positions are modified to phosphoserine: serine 170 and serine 179. The region spanning 377–473 (KLFRPKKLML…WMAACILASK (97 aa)) is the PH domain.

Belongs to the kindlin family. Interacts with the cytoplasmic domain of integrins ITGB1 and ITGB3.

It localises to the cytoplasm. The protein localises to the cytoskeleton. The protein resides in the cell junction. It is found in the focal adhesion. Its subcellular location is the cell projection. It localises to the ruffle membrane. In terms of biological role, involved in cell adhesion. Contributes to integrin activation. When coexpressed with talin, potentiates activation of ITGA2B. Required for normal keratinocyte proliferation. Required for normal polarization of basal keratinocytes in skin, and for normal cell shape. Required for normal adhesion of keratinocytes to fibronectin and laminin, and for normal keratinocyte migration to wound sites. This Mus musculus (Mouse) protein is Fermitin family homolog 1 (Fermt1).